The primary structure comprises 281 residues: MAWFRRKQKGILTPTEHKKEIPDGLWYKSPKGKIIQIKELKENVYVSPEDGYHVRIGSKEYFELLFDNNQFTEIAANLTSADPLEFIDNKPYTQRLQQAQQDTQLKDSIQVGYGPVNGNSMVIACMDFNFIGGSMGSVVGEKIAKAVDHALEHKAPLLIISKSGGARMMEAGLSLMQMAKTSAKLLQLAKARIPYISLLTDPTTGGVTASFAMLGDFNIAEPGALIGFAGPRIIRDTIGRDLPKGFQTSEFLLEHGFLDFIVDRRMLKATLTKLLTMLANN.

One can recognise a CoA carboxyltransferase N-terminal domain in the interval 24 to 281 (GLWYKSPKGK…TKLLTMLANN (258 aa)).

The protein belongs to the AccD/PCCB family. As to quaternary structure, acetyl-CoA carboxylase is a heterohexamer composed of biotin carboxyl carrier protein (AccB), biotin carboxylase (AccC) and two subunits each of ACCase subunit alpha (AccA) and ACCase subunit beta (AccD).

The protein localises to the cytoplasm. It carries out the reaction N(6)-carboxybiotinyl-L-lysyl-[protein] + acetyl-CoA = N(6)-biotinyl-L-lysyl-[protein] + malonyl-CoA. Its pathway is lipid metabolism; malonyl-CoA biosynthesis; malonyl-CoA from acetyl-CoA: step 1/1. Functionally, component of the acetyl coenzyme A carboxylase (ACC) complex. Biotin carboxylase (BC) catalyzes the carboxylation of biotin on its carrier protein (BCCP) and then the CO(2) group is transferred by the transcarboxylase to acetyl-CoA to form malonyl-CoA. This chain is Acetyl-coenzyme A carboxylase carboxyl transferase subunit beta, found in Amoebophilus asiaticus (strain 5a2).